A 492-amino-acid polypeptide reads, in one-letter code: Histone-lysine N-methyltransferase ASHH1 (492 aa).

One can recognise an AWS domain in the interval 36-87 (EDISICECKFDFGDPDSACGERCLNVITNTECTPGYCPCGVYCKNQKFQKCE). One can recognise an SET domain in the interval 84 to 206 (QKCEYAKTKL…PRTELAYDYN (123 aa)). The region spanning 213–229 (AKVRCLCGAVACSGFLG) is the Post-SET domain. Positions 259–340 (SAEDELTSEP…NSQEDSSPKT (82 aa)) are disordered. Polar residues predominate over residues 266–275 (SEPSKNGESN). A compositionally biased stretch (basic and acidic residues) spans 277–290 (NEEKEKDISTENHL). Residues 291-306 (ESTALNIQQQSDSTPT) are compositionally biased toward polar residues. Positions 317–326 (VKTETSEDMK) are enriched in basic and acidic residues. Residues 328–339 (LSQNSQEDSSPK) show a composition bias toward polar residues.

The protein belongs to the class V-like SAM-binding methyltransferase superfamily. Histone-lysine methyltransferase family. SET2 subfamily.

It localises to the nucleus. It is found in the chromosome. Its subcellular location is the centromere. It carries out the reaction L-lysyl(4)-[histone H3] + 3 S-adenosyl-L-methionine = N(6),N(6),N(6)-trimethyl-L-lysyl(4)-[histone H3] + 3 S-adenosyl-L-homocysteine + 3 H(+). In terms of biological role, histone methyltransferase involved in regulation of flowering time. Required for the expression of the SOC1/AGL20 gene. Required for histone H3 trimethylation on 'Lys-4' (H3K4me3) at the SOC1 locus. Prevents trimethylation on 'Lys-27' (H3K27me3) at the same locus. The chain is Histone-lysine N-methyltransferase ASHH1 (ASHH1) from Arabidopsis thaliana (Mouse-ear cress).